A 314-amino-acid polypeptide reads, in one-letter code: Citrate/oxoglutarate carrier protein (314 aa).

Solcar repeat units follow at residues 18–100 (VSFS…EAEY), 107–199 (LNNF…VEDG), and 217–301 (EKIG…AKEF). The next 5 membrane-spanning stretches (helical) occupy residues 23-44 (ILLGACLNLSEVTTLGQPLEVV), 77-97 (IPWAWIEASTKGAVLLFVSAE), 111-127 (ASGILGGVTGGVTQAYL), 178-198 (VAIRQMTNWGSRFGLSRLVED), and 218-238 (KIGASALGGGLSAWNQPIEVI). The DNA-binding element occupies 246-259 (KEDPNRPKNLTVGK). Residues 273–294 (LYRGVTPRIGLGIWQTVFMVGF) form a helical membrane-spanning segment.

Belongs to the mitochondrial carrier (TC 2.A.29) family.

Its subcellular location is the mitochondrion inner membrane. The protein resides in the mitochondrion matrix. The protein localises to the mitochondrion nucleoid. With respect to regulation, strongly inhibited by mersalyl, p-chloromercuribenzenesulfonate, mercuric chloride, N-ethylmaleimide, pyridoxal 5'-phosphate, bathophenanthroline, and tannic acid. Partially inhibited by alpha-cyanocinnamate and bromescol purple. Weakly inhibited by butylmalonate and phenylsuccinate. Not inhibited by 1,2,3-benzenetricarboxylate or carboxyatractyloside. Its function is as follows. Mitochondrial antiporter which catalyzes the transport of citrate and oxoglutarate across the membrane. Also shows specificity for oxaloacetate, and to a lesser extent succinate and fumarate. Transports isocitrate, cis-aconitate and L-malate with very low efficiency. Does not show uniporter activity. Helps to maintain normal citrate levels and NADPH/NADP(+) ratios under conditions of oxidative stress. In addition, associates with the mitochondrial nucleoid and binds DNA in vitro, although the relevance of these data in vivo is unclear. This is Citrate/oxoglutarate carrier protein (YHM2) from Saccharomyces cerevisiae (strain ATCC 204508 / S288c) (Baker's yeast).